Consider the following 124-residue polypeptide: FK506-binding protein 1 (124 aa).

Residues 23–122 (GDTVTIHYDG…VFEVELLGVN (100 aa)) enclose the PPIase FKBP-type domain.

It belongs to the FKBP-type PPIase family. FKBP1 subfamily.

It is found in the cytoplasm. The catalysed reaction is [protein]-peptidylproline (omega=180) = [protein]-peptidylproline (omega=0). Its activity is regulated as follows. Inhibited by rapamycin. Its function is as follows. PPIases accelerate the folding of proteins. It catalyzes the cis-trans isomerization of proline imidic peptide bonds in oligopeptides. This Candida albicans (strain SC5314 / ATCC MYA-2876) (Yeast) protein is FK506-binding protein 1 (RBP1).